A 283-amino-acid polypeptide reads, in one-letter code: Protein/nucleic acid deglycase HchA (283 aa).

Zn(2+) contacts are provided by His-86, Glu-91, and His-123. The Nucleophile role is filled by Cys-185.

It belongs to the peptidase C56 family. HchA subfamily. In terms of assembly, homodimer.

The protein localises to the cytoplasm. The catalysed reaction is N(omega)-(1-hydroxy-2-oxopropyl)-L-arginyl-[protein] + H2O = lactate + L-arginyl-[protein] + H(+). It carries out the reaction N(6)-(1-hydroxy-2-oxopropyl)-L-lysyl-[protein] + H2O = lactate + L-lysyl-[protein] + H(+). The enzyme catalyses S-(1-hydroxy-2-oxopropyl)-L-cysteinyl-[protein] + H2O = lactate + L-cysteinyl-[protein] + H(+). It catalyses the reaction N(omega)-(1-hydroxy-2-oxoethyl)-L-arginyl-[protein] + H2O = L-arginyl-[protein] + glycolate + H(+). The catalysed reaction is N(6)-(1-hydroxy-2-oxoethyl)-L-lysyl-[protein] + H2O = glycolate + L-lysyl-[protein] + H(+). It carries out the reaction S-(1-hydroxy-2-oxoethyl)-L-cysteinyl-[protein] + H2O = glycolate + L-cysteinyl-[protein] + H(+). The enzyme catalyses N(2)-(1-hydroxy-2-oxopropyl)-dGTP + H2O = lactate + dGTP + H(+). It catalyses the reaction N(2)-(1-hydroxy-2-oxopropyl)-GTP + H2O = lactate + GTP + H(+). The catalysed reaction is N(2)-(1-hydroxy-2-oxopropyl)-GDP + H2O = lactate + GDP + H(+). It carries out the reaction N(2)-(1-hydroxy-2-oxopropyl)-GMP + H2O = lactate + GMP + H(+). The enzyme catalyses N(2)-(1-hydroxy-2-oxoethyl)-dGTP + H2O = dGTP + glycolate + H(+). It catalyses the reaction N(2)-(1-hydroxy-2-oxoethyl)-GTP + H2O = glycolate + GTP + H(+). The catalysed reaction is N(2)-(1-hydroxy-2-oxoethyl)-GDP + H2O = glycolate + GDP + H(+). It carries out the reaction N(2)-(1-hydroxy-2-oxoethyl)-GMP + H2O = glycolate + GMP + H(+). The enzyme catalyses an N(2)-(1-hydroxy-2-oxopropyl)-guanosine in RNA + H2O = a guanosine in RNA + lactate + H(+). It catalyses the reaction an N(2)-(1-hydroxy-2-oxopropyl)-2'-deoxyguanosine in DNA + H2O = a 2'-deoxyguanosine in DNA + lactate + H(+). The catalysed reaction is an N(2)-(1-hydroxy-2-oxoethyl)-guanosine in RNA + H2O = a guanosine in RNA + glycolate + H(+). It carries out the reaction an N(2)-(1-hydroxy-2-oxoethyl)-2'-deoxyguanosine in DNA + H2O = a 2'-deoxyguanosine in DNA + glycolate + H(+). In terms of biological role, protein and nucleotide deglycase that catalyzes the deglycation of the Maillard adducts formed between amino groups of proteins or nucleotides and reactive carbonyl groups of glyoxals. Thus, functions as a protein deglycase that repairs methylglyoxal- and glyoxal-glycated proteins, and releases repaired proteins and lactate or glycolate, respectively. Deglycates cysteine, arginine and lysine residues in proteins, and thus reactivates these proteins by reversing glycation by glyoxals. Acts on early glycation intermediates (hemithioacetals and aminocarbinols), preventing the formation of Schiff bases and advanced glycation endproducts (AGE). Also functions as a nucleotide deglycase able to repair glycated guanine in the free nucleotide pool (GTP, GDP, GMP, dGTP) and in DNA and RNA. Is thus involved in a major nucleotide repair system named guanine glycation repair (GG repair), dedicated to reversing methylglyoxal and glyoxal damage via nucleotide sanitization and direct nucleic acid repair. Plays an important role in protecting cells from carbonyl stress. The protein is Protein/nucleic acid deglycase HchA of Escherichia coli O45:K1 (strain S88 / ExPEC).